The sequence spans 659 residues: Tetratricopeptide repeat protein 30 homolog (659 aa).

TPR repeat units follow at residues S3–I36, R43–V76, A143–N176, H178–N210, C391–I424, T450–D483, and C533–A566.

Belongs to the TTC30/dfy-1/fleer family.

The protein resides in the cell projection. It localises to the cilium. Its function is as follows. Required for polyglutamylation of axonemal tubulin in sensory cilia. Plays a role in anterograde intraflagellar transport (IFT), the process by which cilia precursors are transported from the base of the cilium to the site of their incorporation at the tip. This chain is Tetratricopeptide repeat protein 30 homolog, found in Aedes aegypti (Yellowfever mosquito).